The chain runs to 84 residues: Small ribosomal subunit protein bS16 (84 aa).

The protein belongs to the bacterial ribosomal protein bS16 family.

The protein is Small ribosomal subunit protein bS16 of Dichelobacter nodosus (strain VCS1703A).